The following is a 546-amino-acid chain: Cyclic GMP-AMP synthase-like receptor (546 aa).

Over residues 1 to 10 (MPVGSRQNRV) the composition is skewed to polar residues. 2 disordered regions span residues 1-116 (MPVG…CASR) and 134-186 (AKQE…RLTN). Residues 35-45 (YTERKERKDVQ) show a composition bias toward basic and acidic residues. Residues 69 to 80 (TSRTLRQTSQSR) are compositionally biased toward low complexity. Composition is skewed to basic and acidic residues over residues 82 to 95 (EVLE…DCKK) and 145 to 174 (KEGY…DKAT). The span at 175 to 186 (SHSTKGSFRLTN) shows a compositional bias: polar residues. Residues Ser243 and 255 to 257 (EFD) contribute to the ATP site. Positions 255, 257, and 374 each coordinate Mg(2+). Residues Asp374 and 428–435 (RTSFSLAE) each bind GTP. ATP-binding positions include 432–435 (SLAE), Lys455, and 470–474 (SYHLK).

The protein belongs to the mab-21 family. Requires Mg(2+) as cofactor. The cofactor is Mn(2+).

It carries out the reaction GTP + ATP = 2',3'-cGAMP + 2 diphosphate. It catalyses the reaction GTP + ATP = pppGp(2'-5')A + diphosphate. The catalysed reaction is pppGp(2'-5')A = 2',3'-cGAMP + diphosphate. Nucleotidyltransferase that catalyzes the formation of cyclic GMP-AMP (2',3'-cGAMP) from ATP and GTP and plays a key role in innate immunity. Directly binds some unknown ligand, activating the nucleotidyltransferase activity, leading to synthesis of 2',3'-cGAMP, a second messenger that binds to and activates Sting, thereby triggering the immune response via activation of the NF-kappa-B transcription factor. In Exaiptasia diaphana (Tropical sea anemone), this protein is Cyclic GMP-AMP synthase-like receptor.